A 73-amino-acid chain; its full sequence is MAFLKKSLFLVLFLGLVSLSICDEEKRQDEDDDDDDDEEKRGVFDIIKGAGKQLIAHAMEKIAEKVGLNKDGN.

The signal sequence occupies residues 1–22 (MAFLKKSLFLVLFLGLVSLSIC). A propeptide spanning residues 23–39 (DEEKRQDEDDDDDDDEE) is cleaved from the precursor.

In terms of tissue distribution, expressed by the skin glands.

The protein localises to the secreted. Functionally, has antibacterial activity against Gram-negative bacterium E.coli ATCC 25922 (MIC=120 uM) but not against S.pneumoniae ATCC 700603, S.choleraesuis ATCC 14028 or against Gram-positive bacterium S.aureus ATCC 29313. Shows no hemolytic activity and no cytotoxicity. This Leptodactylus pustulatus (Ceara white-lipped frog) protein is Ocellatin-PT6.